The sequence spans 400 residues: NIDGKGQEGLELSREDSLRGEDGAKVVLRDNKGNIVDSLDSPRNSVPKNGQDMILSLDQRIQTLAYDELNKAVAYHKAKAGAVVVLDAQTGEILALVNSPAYDPNQPGQANSEQRRNRAVTDMIEPGSAMKPFTIAKALDSGKVDPTDTFNTLPYKIGPATVQDTHVYPTLDVRGIMQKSSNVGTSKLSAMFTPKEMYDFYHDLGVGVRMHSGFPGETAGLLRSWRRWQKIEQATMSFGYGLQLSLLQLARAYTVLTHDGELLPVSFEKQAVAPKGKRVIKASTAKKVRELMVSVTEAGGTGIAGAVDGFDVGAKTGTARKLVNGRYVDNKHVGTFIGFAPAKNPRVIVAVTIDEPTANGYYGGVVAGPVFKEVMSGSLNILGVSPTKPLSNTATVKVPS.

The disordered stretch occupies residues 1 to 21 (NIDGKGQEGLELSREDSLRGE). Ser-128 (acyl-ester intermediate) is an active-site residue.

It belongs to the transpeptidase family. FtsI subfamily.

Its subcellular location is the cell inner membrane. It catalyses the reaction Preferential cleavage: (Ac)2-L-Lys-D-Ala-|-D-Ala. Also transpeptidation of peptidyl-alanyl moieties that are N-acyl substituents of D-alanine.. It functions in the pathway cell wall biogenesis; peptidoglycan biosynthesis. Catalyzes cross-linking of the peptidoglycan cell wall at the division septum. In Neisseria flavescens, this protein is Probable peptidoglycan D,D-transpeptidase PenA.